The following is a 506-amino-acid chain: Carboxyl-terminal PDZ ligand of neuronal nitric oxide synthase protein (506 aa).

The region spanning 26–196 (FQHGICFEAK…ESERNSNSSG (171 aa)) is the PID domain. 2 disordered regions span residues 175-224 (HTQQ…VEVP) and 241-260 (DAVG…HPQE). Phosphoserine occurs at positions 188, 192, and 195. Residues 203 to 213 (TGAERASTATA) show a composition bias toward low complexity. At serine 266 the chain carries Phosphoserine. Residues 322-363 (AAEAAARLEAQARVHQLLLQNKDMLQHISLLVKQVQELELKL) are a coiled coil. Residues serine 371, serine 374, serine 401, and serine 417 each carry the phosphoserine modification. An interaction with NOS1 region spans residues 494-506 (QELGDGLDDEIAV). A PDZ-binding motif is present at residues 504 to 506 (IAV).

In terms of assembly, interacts with the PDZ domain of NOS1 or the second PDZ domain of DLG4 through its C-terminus. Interacts with RASD1 and SYN1, SYN2 and SYN3 via its PID domain. Forms a ternary complex with NOS1 and RASD1. Forms a ternary complex with NOS1 and SYN1. As to expression, expressed in kidney glomeruli podocytes.

It localises to the cell projection. The protein resides in the filopodium. Its subcellular location is the podosome. Its function is as follows. Adapter protein involved in neuronal nitric-oxide (NO) synthesis regulation via its association with nNOS/NOS1. The complex formed with NOS1 and synapsins is necessary for specific NO and synapsin functions at a presynaptic level. Mediates an indirect interaction between NOS1 and RASD1 leading to enhance the ability of NOS1 to activate RASD1. Competes with DLG4 for interaction with NOS1, possibly affecting NOS1 activity by regulating the interaction between NOS1 and DLG4. In kidney podocytes, plays a role in podosomes and filopodia formation through CDC42 activation. This chain is Carboxyl-terminal PDZ ligand of neuronal nitric oxide synthase protein, found in Homo sapiens (Human).